The following is a 622-amino-acid chain: Polypeptide N-acetylgalactosaminyltransferase 6 (622 aa).

Residues 1–8 (MRLLRRRH) lie on the Cytoplasmic side of the membrane. A helical; Signal-anchor for type II membrane protein membrane pass occupies residues 9–28 (MSLRLAMLGSVFMLFLFIRQ). The Lumenal portion of the chain corresponds to 29 to 622 (KDVSNQEQAM…RDPYQLWLFV (594 aa)). N86 is a glycosylation site (N-linked (GlcNAc...) asparagine). The segment at 176-285 (LPTTSVIIVF…HGWLEPLLAR (110 aa)) is catalytic subdomain A. D269, H271, and H407 together coordinate Mn(2+). A catalytic subdomain B region spans residues 348–410 (PIKSPTFAGG…PCSVVGHVFR (63 aa)). N476 is a glycosylation site (N-linked (GlcNAc...) asparagine). A Ricin B-type lectin domain is found at 506–622 (TNQCLDVGEN…RDPYQLWLFV (117 aa)). C509 and C527 are oxidised to a cystine. UDP-N-acetyl-alpha-D-galactosamine contacts are provided by D511, E514, H528, and N533. 2 disulfide bridges follow: C553-C566 and C597-C610.

This sequence belongs to the glycosyltransferase 2 family. GalNAc-T subfamily. Requires Mn(2+) as cofactor.

The protein localises to the golgi apparatus membrane. It carries out the reaction L-seryl-[protein] + UDP-N-acetyl-alpha-D-galactosamine = a 3-O-[N-acetyl-alpha-D-galactosaminyl]-L-seryl-[protein] + UDP + H(+). It catalyses the reaction L-threonyl-[protein] + UDP-N-acetyl-alpha-D-galactosamine = a 3-O-[N-acetyl-alpha-D-galactosaminyl]-L-threonyl-[protein] + UDP + H(+). It participates in protein modification; protein glycosylation. Catalyzes the initial reaction in O-linked oligosaccharide biosynthesis, the transfer of an N-acetyl-D-galactosamine residue to a serine or threonine residue on the protein receptor. May participate in synthesis of oncofetal fibronectin. Has activity toward Muc1a, Muc2, EA2 and fibronectin peptides. This chain is Polypeptide N-acetylgalactosaminyltransferase 6 (Galnt6), found in Mus musculus (Mouse).